Reading from the N-terminus, the 31-residue chain is Antifungal protein 1 (31 aa).

2 stretches are compositionally biased toward basic and acidic residues: residues 1–10 and 18–31; these read PGAGSQEERM and DFSH…MVRE. The interval 1–31 is disordered; it reads PGAGSQEERMQGQMEGQDFSHEERFLSMVRE.

As to quaternary structure, heterodimer; disulfide-linked. Disulfide bonds.

Has antifungal activity against C.gloeosporioides but not against B.cinerea and Fusarium sp. or against various yeasts. Has no antibacterial activity. The polypeptide is Antifungal protein 1 (Passiflora alata (Winged-stem passion flower)).